We begin with the raw amino-acid sequence, 292 residues long: Probable 2-(5''-triphosphoribosyl)-3'-dephosphocoenzyme-A synthase (292 aa).

Belongs to the CitG/MdcB family.

It carries out the reaction 3'-dephospho-CoA + ATP = 2'-(5''-triphospho-alpha-D-ribosyl)-3'-dephospho-CoA + adenine. The polypeptide is Probable 2-(5''-triphosphoribosyl)-3'-dephosphocoenzyme-A synthase (Shigella flexneri).